A 157-amino-acid polypeptide reads, in one-letter code: MSIEIANESGADVDTDAVLAVARHALDEMGVNQLAELSVLLVDIDYMAELNHRWMGGDGPTDVLAFPMDEGSVDHGPGENAAAGAEPALLGDIVLCPEVAAKQAVTAGHSTADELHLLTVHGVLHLLGYDHAEPEEEREMFALQARLLASWRSTRSR.

Residues H121, H125, and H131 each contribute to the Zn(2+) site.

This sequence belongs to the endoribonuclease YbeY family. The cofactor is Zn(2+).

The protein localises to the cytoplasm. In terms of biological role, single strand-specific metallo-endoribonuclease involved in late-stage 70S ribosome quality control and in maturation of the 3' terminus of the 16S rRNA. In Salinispora tropica (strain ATCC BAA-916 / DSM 44818 / JCM 13857 / NBRC 105044 / CNB-440), this protein is Endoribonuclease YbeY.